Consider the following 217-residue polypeptide: Glutathione S-transferase B (217 aa).

The GST N-terminal domain maps to 1 to 87; sequence PMTLGYWNIR…YIARKHNLCG (87 aa). Residues 6-7, 45-49, 58-59, and 71-72 contribute to the glutathione site; these read YW, WLNEK, NL, and QS. The GST C-terminal domain occupies 89–207; it reads TEEETIRMDI…KSSRFLPKPL (119 aa). Position 115 (Y115) interacts with substrate.

The protein belongs to the GST superfamily. Mu family. Homodimer.

The protein resides in the cytoplasm. It catalyses the reaction RX + glutathione = an S-substituted glutathione + a halide anion + H(+). The catalysed reaction is prostaglandin A2 + glutathione = prostaglandin A2-S-(R)-glutathione. It carries out the reaction prostaglandin J2 + glutathione = prostaglandin J2-S-(R)-glutathione. The enzyme catalyses prostaglandin J2 + glutathione = prostaglandin J2-S-(S)-glutathione. It catalyses the reaction prostaglandin A2 + glutathione = prostaglandin A2-S-(S)-glutathione. The catalysed reaction is 11(S)-hydroxy-14(S),15(S)-epoxy-(5Z,8Z,12E)-eicosatrienoate + glutathione = (11S,15S)-dihydroxy-14(R)-S-glutathionyl-(5Z,8Z,12E)-eicosatrienoate. Functionally, conjugation of reduced glutathione to a wide number of exogenous and endogenous hydrophobic electrophiles. Involved in the formation of glutathione conjugates of both prostaglandin A2 (PGA2) and prostaglandin J2 (PGJ2). Participates in the formation of novel hepoxilin regioisomers. The polypeptide is Glutathione S-transferase B (GSTM1) (Cavia porcellus (Guinea pig)).